A 538-amino-acid chain; its full sequence is Thermosome subunit beta (538 aa).

The tract at residues serine 518–methionine 538 is disordered. Gly residues predominate over residues glutamate 528–methionine 538.

The protein belongs to the TCP-1 chaperonin family. Forms a Heterooligomeric complex of two stacked eight-membered rings.

Molecular chaperone; binds unfolded polypeptides in vitro, and has a weak ATPase activity. The polypeptide is Thermosome subunit beta (thsB) (Methanothermobacter thermautotrophicus (strain ATCC 29096 / DSM 1053 / JCM 10044 / NBRC 100330 / Delta H) (Methanobacterium thermoautotrophicum)).